We begin with the raw amino-acid sequence, 800 residues long: Serine/threonine-protein kinase KIN4 (800 aa).

In terms of domain architecture, Protein kinase spans 46-313 (YIIGSTLGEG…LQTIKRHVWL (268 aa)). ATP-binding positions include 52–60 (LGEGEFGKV) and Lys-80. Asp-175 (proton acceptor) is an active-site residue. Disordered regions lie at residues 331-397 (LQKE…GSKV) and 438-487 (SARH…TSFT). The segment covering 348 to 358 (STYSSSASSYS) has biased composition (low complexity). Ser-365 and Ser-388 each carry phosphoserine. Composition is skewed to polar residues over residues 380–395 (QLAT…STGS) and 459–473 (GSPT…PSSK). The residue at position 521 (Ser-521) is a Phosphoserine. 2 disordered regions span residues 629-661 (EPTN…DKDS) and 678-754 (SLNG…PGRS). Residues 678–721 (SLNGSRSTVESRTSKGNAPPVSSRNPSGQSNRSNIKITQQQPRN) show a composition bias toward polar residues. Basic and acidic residues predominate over residues 727–740 (PNPDKKINDNRIRD). Residue Ser-748 is modified to Phosphoserine.

Belongs to the protein kinase superfamily. Ser/Thr protein kinase family.

It carries out the reaction L-seryl-[protein] + ATP = O-phospho-L-seryl-[protein] + ADP + H(+). It catalyses the reaction L-threonyl-[protein] + ATP = O-phospho-L-threonyl-[protein] + ADP + H(+). This protein is probably a serine/threonine protein kinase. The polypeptide is Serine/threonine-protein kinase KIN4 (KIN4) (Saccharomyces cerevisiae (strain ATCC 204508 / S288c) (Baker's yeast)).